The chain runs to 210 residues: Endonuclease III (210 aa).

In terms of domain architecture, HhH spans 108 to 127 (FKALIKLPGVGRKTANVVLN). Residues C187, C194, C197, and C203 each contribute to the [4Fe-4S] cluster site.

This sequence belongs to the Nth/MutY family. It depends on [4Fe-4S] cluster as a cofactor.

It catalyses the reaction 2'-deoxyribonucleotide-(2'-deoxyribose 5'-phosphate)-2'-deoxyribonucleotide-DNA = a 3'-end 2'-deoxyribonucleotide-(2,3-dehydro-2,3-deoxyribose 5'-phosphate)-DNA + a 5'-end 5'-phospho-2'-deoxyribonucleoside-DNA + H(+). DNA repair enzyme that has both DNA N-glycosylase activity and AP-lyase activity. The DNA N-glycosylase activity releases various damaged pyrimidines from DNA by cleaving the N-glycosidic bond, leaving an AP (apurinic/apyrimidinic) site. The AP-lyase activity cleaves the phosphodiester bond 3' to the AP site by a beta-elimination, leaving a 3'-terminal unsaturated sugar and a product with a terminal 5'-phosphate. The chain is Endonuclease III from Rickettsia conorii (strain ATCC VR-613 / Malish 7).